The following is a 300-amino-acid chain: Aspartate carbamoyltransferase catalytic subunit (300 aa).

Positions 50 and 51 each coordinate carbamoyl phosphate. Residue K78 participates in L-aspartate binding. Carbamoyl phosphate contacts are provided by R100, H127, and Q130. The L-aspartate site is built by R160 and R210. 2 residues coordinate carbamoyl phosphate: A253 and P254.

Belongs to the aspartate/ornithine carbamoyltransferase superfamily. ATCase family. Heterododecamer (2C3:3R2) of six catalytic PyrB chains organized as two trimers (C3), and six regulatory PyrI chains organized as three dimers (R2).

It catalyses the reaction carbamoyl phosphate + L-aspartate = N-carbamoyl-L-aspartate + phosphate + H(+). Its pathway is pyrimidine metabolism; UMP biosynthesis via de novo pathway; (S)-dihydroorotate from bicarbonate: step 2/3. Functionally, catalyzes the condensation of carbamoyl phosphate and aspartate to form carbamoyl aspartate and inorganic phosphate, the committed step in the de novo pyrimidine nucleotide biosynthesis pathway. In Staphylococcus saprophyticus subsp. saprophyticus (strain ATCC 15305 / DSM 20229 / NCIMB 8711 / NCTC 7292 / S-41), this protein is Aspartate carbamoyltransferase catalytic subunit.